The chain runs to 127 residues: Large-conductance mechanosensitive channel (127 aa).

The next 3 membrane-spanning stretches (helical) occupy residues 9–29 (EFAM…GVAF), 32–52 (IVTA…LGGI), and 75–95 (VIDF…INLL).

It belongs to the MscL family. Homopentamer.

The protein resides in the cell inner membrane. Channel that opens in response to stretch forces in the membrane lipid bilayer. May participate in the regulation of osmotic pressure changes within the cell. This Legionella pneumophila (strain Paris) protein is Large-conductance mechanosensitive channel.